A 523-amino-acid chain; its full sequence is MSQQVIIFDTTLRDGEQALQASLSAKEKLQIALALERMGVDVMEVGFPVSSPGDFESVQTIARTIKNSRVCALARCVEKDIDVAAQALKVADAFRIHTFIATSPMHIATKLRSTLDEVIERAVYMVKRARNYTDDVEFSCEDAGRTPVDDLARVVEAAINAGARTINIPDTVGYTMPFEFAGIISGLYERVPNIDKAIISVHTHDDLGIAVGNSLAAVHAGARQVEGAMNGIGERAGNCALEEVIMAIKVRKDIMNVHTNINHHEIWRTSQTVSQICNMPIPANKAIVGSGAFAHSSGIHQDGVLKNRENYEIMTPESIGLNQIQLNLTSRSGRAAVKHRMEEMGYKDTDYNIDHLYDAFLKLADKKGQVFDYDLEALAFINKQQEEPEHFRLDYFSVQSGSSDIATASVKLACGEEIKAEAANGNGPVDAIYQAINRITGYDVELVKYDLNAKGQGKDALGQVDIVVNHHGRRFHGVGLATDIVESSAKAMVHVLNNIWRAAEVEKELQRKAQNKENNKETV.

One can recognise a Pyruvate carboxyltransferase domain in the interval 5–267; that stretch reads VIIFDTTLRD…HTNINHHEIW (263 aa). Residues Asp-14, His-202, His-204, and Asn-238 each coordinate Mn(2+). A regulatory domain region spans residues 392–523; the sequence is RLDYFSVQSG…QNKENNKETV (132 aa).

The protein belongs to the alpha-IPM synthase/homocitrate synthase family. LeuA type 1 subfamily. In terms of assembly, homodimer. The cofactor is Mn(2+).

It is found in the cytoplasm. It carries out the reaction 3-methyl-2-oxobutanoate + acetyl-CoA + H2O = (2S)-2-isopropylmalate + CoA + H(+). Its pathway is amino-acid biosynthesis; L-leucine biosynthesis; L-leucine from 3-methyl-2-oxobutanoate: step 1/4. In terms of biological role, catalyzes the condensation of the acetyl group of acetyl-CoA with 3-methyl-2-oxobutanoate (2-ketoisovalerate) to form 3-carboxy-3-hydroxy-4-methylpentanoate (2-isopropylmalate). This Salmonella newport (strain SL254) protein is 2-isopropylmalate synthase.